Here is a 93-residue protein sequence, read N- to C-terminus: Large ribosomal subunit protein bL31 (93 aa).

Residues 68–93 (GSADAAADEKKTDAKNNNKDNTSKED) form a disordered region. Over residues 74 to 93 (ADEKKTDAKNNNKDNTSKED) the composition is skewed to basic and acidic residues.

Belongs to the bacterial ribosomal protein bL31 family. Type A subfamily. Part of the 50S ribosomal subunit.

Its function is as follows. Binds the 23S rRNA. This is Large ribosomal subunit protein bL31 from Prochlorococcus marinus (strain MIT 9303).